The primary structure comprises 422 residues: MQRYLVGGAVRDALLGLPVKDRDWVVVGATPEQMLDQGYQQVGADFPVFLHPESKEEHALARTERKSGKGYTGFICDFSPDISLEDDLLRRDLTINAMAMDDDGNLVDPFNGRQDLEARILRHVSPAFTEDPLRVLRVARFASRYADLGFTVAPETLQLMQDIQASGELKALTAERVWQETVRALGQKQPRVYFQVLKDAHALQDIFPELNALFGVPQTPQYHPEVDTGLHSLMALEQACLLSEREEVRFAALIHDLGKGVTPQEEWPKHHNHEAVGVDLVKALTERVKAPKLFKELALMACQYHTHCHRALELRANTLVKLLQSCDAWRRPDRFELFLLACEADARGRTGWEQKPYPQADFLRGVLETCQQIQPQELVAQGYTGARLGEEIQRRRISAVKRFKQDNAPEAQEKGGEDVGLT.

ATP-binding residues include G8 and R11. Residues G8 and R11 each contribute to the CTP site. Mg(2+)-binding residues include D21 and D23. Positions 91, 137, and 140 each coordinate ATP. CTP-binding residues include R91, R137, and R140. The region spanning 228-329 (TGLHSLMALE…VKLLQSCDAW (102 aa)) is the HD domain. The interval 403–422 (FKQDNAPEAQEKGGEDVGLT) is disordered.

It belongs to the tRNA nucleotidyltransferase/poly(A) polymerase family. Bacterial CCA-adding enzyme type 1 subfamily. Monomer. Can also form homodimers and oligomers. It depends on Mg(2+) as a cofactor. Requires Ni(2+) as cofactor.

It carries out the reaction a tRNA precursor + 2 CTP + ATP = a tRNA with a 3' CCA end + 3 diphosphate. It catalyses the reaction a tRNA with a 3' CCA end + 2 CTP + ATP = a tRNA with a 3' CCACCA end + 3 diphosphate. Catalyzes the addition and repair of the essential 3'-terminal CCA sequence in tRNAs without using a nucleic acid template. Adds these three nucleotides in the order of C, C, and A to the tRNA nucleotide-73, using CTP and ATP as substrates and producing inorganic pyrophosphate. tRNA 3'-terminal CCA addition is required both for tRNA processing and repair. Also involved in tRNA surveillance by mediating tandem CCA addition to generate a CCACCA at the 3' terminus of unstable tRNAs. While stable tRNAs receive only 3'-terminal CCA, unstable tRNAs are marked with CCACCA and rapidly degraded. The sequence is that of Multifunctional CCA protein from Hahella chejuensis (strain KCTC 2396).